A 1217-amino-acid chain; its full sequence is ATP-dependent RNA helicase DHX30 (1217 aa).

2 positions are modified to phosphoserine: Asp-15 and Ser-29. Residues 76 to 144 (PKNLLNSVIG…QAAAAACQLF (69 aa)) form the DRBM domain. The disordered stretch occupies residues 176 to 223 (WWRPEPTMPPTSWRQLNPENIRPGGPAGLSRSLGREEEEDEEEELEEG). The segment covering 211-223 (EEEEDEEEELEEG) has biased composition (acidic residues). 2 positions are modified to phosphoserine: Ser-249 and Ser-403. Residues 467–635 (LSAIEQHPVV…FGGCPVIKVP (169 aa)) enclose the Helicase ATP-binding domain. ATP is bound at residue 480–487 (GDTGCGKT). Residues 582–585 (DEVH) carry the DEAH box motif. The Helicase C-terminal domain maps to 677–850 (LVTDLVLHID…NLVLQAKIHM (174 aa)).

This sequence belongs to the DEAD box helicase family. DEAH subfamily. Identified in a complex with TFAM and SSBP1. Interacts (via N-terminus) with ZC3HAV1 (via N-terminal domain) in an RNA-independent manner. Found in a complex with GRSF1, DDX28, FASTKD2 and FASTKD5. Phosphorylated on Ser-15. Expressed in the heart, brain, spleen, lung, liver, skeletal muscle, kidney, and testis. Expression is strongest in the testis and brain, while the lowest levels of expression are found in the spleen and lung.

The protein resides in the cytoplasm. The protein localises to the mitochondrion. Its subcellular location is the mitochondrion matrix. It is found in the mitochondrion nucleoid. It carries out the reaction ATP + H2O = ADP + phosphate + H(+). Functionally, RNA-dependent helicase. Plays an important role in the assembly of the mitochondrial large ribosomal subunit. Required for optimal function of the zinc-finger antiviral protein ZC3HAV1. Associates with mitochondrial DNA. Involved in nervous system development and differentiation through its involvement in the up-regulation of a number of genes which are required for neurogenesis, including GSC, NCAM1, neurogenin, and NEUROD. The sequence is that of ATP-dependent RNA helicase DHX30 (Dhx30) from Mus musculus (Mouse).